The chain runs to 207 residues: Thiamine-phosphate synthase (207 aa).

4-amino-2-methyl-5-(diphosphooxymethyl)pyrimidine is bound by residues 38–42 and Asn-70; that span reads QYRAK. Residues Asp-71 and Asp-90 each contribute to the Mg(2+) site. Residue Thr-109 participates in 4-amino-2-methyl-5-(diphosphooxymethyl)pyrimidine binding. A 2-[(2R,5Z)-2-carboxy-4-methylthiazol-5(2H)-ylidene]ethyl phosphate-binding site is contributed by 135 to 137; the sequence is TNS. Residue Lys-138 coordinates 4-amino-2-methyl-5-(diphosphooxymethyl)pyrimidine. 2-[(2R,5Z)-2-carboxy-4-methylthiazol-5(2H)-ylidene]ethyl phosphate contacts are provided by residues Gly-165 and 185–186; that span reads IS.

Belongs to the thiamine-phosphate synthase family. Mg(2+) is required as a cofactor.

It catalyses the reaction 2-[(2R,5Z)-2-carboxy-4-methylthiazol-5(2H)-ylidene]ethyl phosphate + 4-amino-2-methyl-5-(diphosphooxymethyl)pyrimidine + 2 H(+) = thiamine phosphate + CO2 + diphosphate. The catalysed reaction is 2-(2-carboxy-4-methylthiazol-5-yl)ethyl phosphate + 4-amino-2-methyl-5-(diphosphooxymethyl)pyrimidine + 2 H(+) = thiamine phosphate + CO2 + diphosphate. It carries out the reaction 4-methyl-5-(2-phosphooxyethyl)-thiazole + 4-amino-2-methyl-5-(diphosphooxymethyl)pyrimidine + H(+) = thiamine phosphate + diphosphate. Its pathway is cofactor biosynthesis; thiamine diphosphate biosynthesis; thiamine phosphate from 4-amino-2-methyl-5-diphosphomethylpyrimidine and 4-methyl-5-(2-phosphoethyl)-thiazole: step 1/1. In terms of biological role, condenses 4-methyl-5-(beta-hydroxyethyl)thiazole monophosphate (THZ-P) and 2-methyl-4-amino-5-hydroxymethyl pyrimidine pyrophosphate (HMP-PP) to form thiamine monophosphate (TMP). This Clostridium perfringens (strain 13 / Type A) protein is Thiamine-phosphate synthase.